Reading from the N-terminus, the 36-residue chain is Histone H1-like protein EM5 (36 aa).

The 36-residue stretch at 1–36 (MITAAVGALKERGGSSRQAILKYIQANFKVQANPAA) folds into the H15 domain.

It belongs to the histone H1/H5 family. In terms of tissue distribution, sperm.

It localises to the nucleus. The protein localises to the chromosome. This chain is Histone H1-like protein EM5, found in Ensis minor (Razor shell).